Consider the following 229-residue polypeptide: Cytidylate kinase (229 aa).

Position 12–20 (12–20) interacts with ATP; it reads GPSGTGKSS.

This sequence belongs to the cytidylate kinase family. Type 1 subfamily.

The protein resides in the cytoplasm. The catalysed reaction is CMP + ATP = CDP + ADP. The enzyme catalyses dCMP + ATP = dCDP + ADP. This chain is Cytidylate kinase, found in Rhodococcus opacus (strain B4).